Here is a 301-residue protein sequence, read N- to C-terminus: Cytochrome c biogenesis protein CcsA (301 aa).

8 helical membrane passes run 13–33, 39–59, 73–93, 97–117, 146–166, 209–229, 236–256, and 270–290; these read NNIT…GLIF, VFYI…IILG, LYES…YLEY, LYLI…FSTL, MLSY…LVLI, TIGF…VWAN, WSWD…AAYL, and AYLA…VNFL.

Belongs to the CcmF/CycK/Ccl1/NrfE/CcsA family. In terms of assembly, may interact with Ccs1.

Its subcellular location is the plastid. It localises to the chloroplast thylakoid membrane. Functionally, required during biogenesis of c-type cytochromes (cytochrome c6 and cytochrome f) at the step of heme attachment. This chain is Cytochrome c biogenesis protein CcsA, found in Guillardia theta (Cryptophyte).